Consider the following 489-residue polypeptide: Mitochondrial-processing peptidase subunit beta (489 aa).

A mitochondrion-targeting transit peptide spans 1–45 (MAAAAVSRTLLPVAGRRLWGFTRRLPLRAAAAQPLYFGGDRLRST). His-101 contacts Zn(2+). Glu-104 serves as the catalytic Proton acceptor. Zn(2+) is bound by residues His-105 and Glu-181.

The protein belongs to the peptidase M16 family. As to quaternary structure, heterodimer of PMPCA (alpha) and PMPCB (beta) subunits, forming the mitochondrial processing protease (MPP) in which PMPCA is involved in substrate recognition and binding and PMPCB is the catalytic subunit. Zn(2+) is required as a cofactor.

It localises to the mitochondrion matrix. It carries out the reaction Release of N-terminal transit peptides from precursor proteins imported into the mitochondrion, typically with Arg in position P2.. Binding to PMPCA is required for catalytic activity. Its function is as follows. Catalytic subunit of the essential mitochondrial processing protease (MPP), which cleaves the mitochondrial sequence off newly imported precursors proteins. Preferentially, cleaves after an arginine at position P2. Required for PINK1 turnover by coupling PINK1 mitochondrial import and cleavage, which results in subsequent PINK1 proteolysis. The sequence is that of Mitochondrial-processing peptidase subunit beta (Pmpcb) from Rattus norvegicus (Rat).